The following is a 398-amino-acid chain: Succinate--CoA ligase [ADP-forming] subunit beta (398 aa).

In terms of domain architecture, ATP-grasp spans 9–254 (KALLHEFGVP…ETEEDAKEIE (246 aa)). ATP is bound by residues Lys46, 53–55 (GRG), Glu109, Ser112, and Glu117. 2 residues coordinate Mg(2+): Asn209 and Asp223. Residues Asn274 and 331 to 333 (GIM) each bind substrate.

It belongs to the succinate/malate CoA ligase beta subunit family. In terms of assembly, heterotetramer of two alpha and two beta subunits. Mg(2+) serves as cofactor.

The enzyme catalyses succinate + ATP + CoA = succinyl-CoA + ADP + phosphate. It catalyses the reaction GTP + succinate + CoA = succinyl-CoA + GDP + phosphate. The protein operates within carbohydrate metabolism; tricarboxylic acid cycle; succinate from succinyl-CoA (ligase route): step 1/1. Functionally, succinyl-CoA synthetase functions in the citric acid cycle (TCA), coupling the hydrolysis of succinyl-CoA to the synthesis of either ATP or GTP and thus represents the only step of substrate-level phosphorylation in the TCA. The beta subunit provides nucleotide specificity of the enzyme and binds the substrate succinate, while the binding sites for coenzyme A and phosphate are found in the alpha subunit. This chain is Succinate--CoA ligase [ADP-forming] subunit beta, found in Bradyrhizobium sp. (strain BTAi1 / ATCC BAA-1182).